We begin with the raw amino-acid sequence, 307 residues long: Probable protein S-acyltransferase 14 (307 aa).

2 helical membrane-spanning segments follow: residues 22–42 (LGSI…YAVV) and 63–83 (ILIL…SVVF). Positions 127-177 (RFCRKCNQLKPSRCHHCSVCGRCVLKMDHHCVWVVNCVGALNYKYFLLFLF) constitute a DHHC domain. Cysteine 157 functions as the S-palmitoyl cysteine intermediate in the catalytic mechanism. The next 2 helical transmembrane spans lie at 171-191 (YFLL…LVLM) and 213-233 (TFLA…FLIM).

Belongs to the DHHC palmitoyltransferase family.

It localises to the golgi apparatus. The protein resides in the trans-Golgi network membrane. It catalyses the reaction L-cysteinyl-[protein] + hexadecanoyl-CoA = S-hexadecanoyl-L-cysteinyl-[protein] + CoA. Functionally, palmitoyl acyltransferase. The polypeptide is Probable protein S-acyltransferase 14 (PAT14) (Arabidopsis thaliana (Mouse-ear cress)).